A 413-amino-acid chain; its full sequence is Serine--tRNA ligase (413 aa).

221–223 (TAE) contacts L-serine. An ATP-binding site is contributed by 252-254 (RRE). E275 is an L-serine binding site. 339-342 (EVSS) is an ATP binding site. S375 lines the L-serine pocket.

Belongs to the class-II aminoacyl-tRNA synthetase family. Type-1 seryl-tRNA synthetase subfamily. Homodimer. The tRNA molecule binds across the dimer.

The protein localises to the cytoplasm. It catalyses the reaction tRNA(Ser) + L-serine + ATP = L-seryl-tRNA(Ser) + AMP + diphosphate + H(+). The catalysed reaction is tRNA(Sec) + L-serine + ATP = L-seryl-tRNA(Sec) + AMP + diphosphate + H(+). It functions in the pathway aminoacyl-tRNA biosynthesis; selenocysteinyl-tRNA(Sec) biosynthesis; L-seryl-tRNA(Sec) from L-serine and tRNA(Sec): step 1/1. In terms of biological role, catalyzes the attachment of serine to tRNA(Ser). Is also able to aminoacylate tRNA(Sec) with serine, to form the misacylated tRNA L-seryl-tRNA(Sec), which will be further converted into selenocysteinyl-tRNA(Sec). This is Serine--tRNA ligase from Dehalococcoides mccartyi (strain ATCC BAA-2100 / JCM 16839 / KCTC 5957 / BAV1).